The following is a 363-amino-acid chain: tRNA/tmRNA (uracil-C(5))-methyltransferase (363 aa).

5 residues coordinate S-adenosyl-L-methionine: Gln-187, Tyr-215, Asn-220, Glu-236, and Asp-296. Catalysis depends on Cys-321, which acts as the Nucleophile. The active-site Proton acceptor is the Glu-355.

It belongs to the class I-like SAM-binding methyltransferase superfamily. RNA M5U methyltransferase family. TrmA subfamily.

It carries out the reaction uridine(54) in tRNA + S-adenosyl-L-methionine = 5-methyluridine(54) in tRNA + S-adenosyl-L-homocysteine + H(+). It catalyses the reaction uridine(341) in tmRNA + S-adenosyl-L-methionine = 5-methyluridine(341) in tmRNA + S-adenosyl-L-homocysteine + H(+). Dual-specificity methyltransferase that catalyzes the formation of 5-methyluridine at position 54 (m5U54) in all tRNAs, and that of position 341 (m5U341) in tmRNA (transfer-mRNA). In Pseudomonas aeruginosa (strain LESB58), this protein is tRNA/tmRNA (uracil-C(5))-methyltransferase.